A 390-amino-acid chain; its full sequence is GTPase Obg (390 aa).

An Obg domain is found at 1–159 (MKFVDEASIL…RDLLLELMLL (159 aa)). Positions 127-147 (NTRFKSSVNRTPRQKTNGTPG) are disordered. Residues 129-145 (RFKSSVNRTPRQKTNGT) show a composition bias toward polar residues. Residues 160–333 (ADVGMLGMPN…LCWDVMTFII (174 aa)) enclose the OBG-type G domain. GTP-binding positions include 166–173 (GMPNAGKS), 191–195 (FTTLV), 213–216 (DIPG), 283–286 (NKID), and 314–316 (SAA). Ser173 and Thr193 together coordinate Mg(2+).

The protein belongs to the TRAFAC class OBG-HflX-like GTPase superfamily. OBG GTPase family. As to quaternary structure, monomer. Mg(2+) is required as a cofactor.

The protein resides in the cytoplasm. In terms of biological role, an essential GTPase which binds GTP, GDP and possibly (p)ppGpp with moderate affinity, with high nucleotide exchange rates and a fairly low GTP hydrolysis rate. Plays a role in control of the cell cycle, stress response, ribosome biogenesis and in those bacteria that undergo differentiation, in morphogenesis control. The protein is GTPase Obg of Salmonella paratyphi A (strain ATCC 9150 / SARB42).